A 232-amino-acid polypeptide reads, in one-letter code: Phosphate import ATP-binding protein PstB (232 aa).

Residues 1-227 (MFNINMEIKE…PKDRRTENYI (227 aa)) enclose the ABC transporter domain. 18 to 25 (GPSGCGKT) is an ATP binding site.

Belongs to the ABC transporter superfamily. Phosphate importer (TC 3.A.1.7) family. As to quaternary structure, the complex is composed of two ATP-binding proteins (PstB), two transmembrane proteins (PstC and PstA) and a solute-binding protein (PstS).

Its subcellular location is the cell membrane. It catalyses the reaction phosphate(out) + ATP + H2O = ADP + 2 phosphate(in) + H(+). Functionally, part of the ABC transporter complex PstSACB involved in phosphate import. Responsible for energy coupling to the transport system. This is Phosphate import ATP-binding protein PstB from Mycoplasma mycoides subsp. mycoides SC (strain CCUG 32753 / NCTC 10114 / PG1).